Reading from the N-terminus, the 209-residue chain is Peptidyl-tRNA hydrolase (209 aa).

Position 14 (Tyr14) interacts with tRNA. Catalysis depends on His19, which acts as the Proton acceptor. TRNA contacts are provided by Tyr68, Asn70, and Asn116.

This sequence belongs to the PTH family. As to quaternary structure, monomer.

Its subcellular location is the cytoplasm. It carries out the reaction an N-acyl-L-alpha-aminoacyl-tRNA + H2O = an N-acyl-L-amino acid + a tRNA + H(+). Its function is as follows. Hydrolyzes ribosome-free peptidyl-tRNAs (with 1 or more amino acids incorporated), which drop off the ribosome during protein synthesis, or as a result of ribosome stalling. In terms of biological role, catalyzes the release of premature peptidyl moieties from peptidyl-tRNA molecules trapped in stalled 50S ribosomal subunits, and thus maintains levels of free tRNAs and 50S ribosomes. This chain is Peptidyl-tRNA hydrolase, found in Phenylobacterium zucineum (strain HLK1).